The primary structure comprises 73 residues: Conotoxin Leo-O2 (73 aa).

The signal sequence occupies residues 1–22; it reads MKLTCVLIIAVLFLTACQLVTA. A propeptide spanning residues 23 to 47 is cleaved from the precursor; the sequence is DYSGDEQQYRAMRLIDAMRNFGDTR. Disulfide bonds link C49-C59, C56-C64, and C58-C69.

The protein belongs to the conotoxin O1 superfamily. In terms of tissue distribution, expressed by the venom duct.

The protein localises to the secreted. This Conus leopardus (Leopard cone) protein is Conotoxin Leo-O2.